Consider the following 351-residue polypeptide: uncharacterized protein (351 aa).

Asp215, Asp226, His290, Glu319, and Glu333 together coordinate Mn(2+).

The protein belongs to the peptidase M24B family. Requires Mn(2+) as cofactor.

This is an uncharacterized protein from Staphylococcus aureus (strain bovine RF122 / ET3-1).